A 391-amino-acid polypeptide reads, in one-letter code: Acetate kinase (391 aa).

A Mg(2+)-binding site is contributed by Asn7. Lys14 provides a ligand contact to ATP. Arg88 lines the substrate pocket. Asp145 acts as the Proton donor/acceptor in catalysis. ATP-binding positions include 203-207 (HAGNG), 278-280 (DAR), and 326-330 (GMGEN). Mg(2+) is bound at residue Glu378.

It belongs to the acetokinase family. Homodimer. Requires Mg(2+) as cofactor. Mn(2+) is required as a cofactor.

The protein localises to the cytoplasm. It catalyses the reaction acetate + ATP = acetyl phosphate + ADP. The protein operates within metabolic intermediate biosynthesis; acetyl-CoA biosynthesis; acetyl-CoA from acetate: step 1/2. Functionally, catalyzes the formation of acetyl phosphate from acetate and ATP. Can also catalyze the reverse reaction. In Phytoplasma mali (strain AT), this protein is Acetate kinase.